The following is a 159-amino-acid chain: SsrA-binding protein (159 aa).

Residues 138–153 are compositionally biased toward basic and acidic residues; that stretch reads KREDGKDKDWSREKER. Positions 138 to 159 are disordered; it reads KREDGKDKDWSREKERLMKHKA.

Belongs to the SmpB family.

Its subcellular location is the cytoplasm. Required for rescue of stalled ribosomes mediated by trans-translation. Binds to transfer-messenger RNA (tmRNA), required for stable association of tmRNA with ribosomes. tmRNA and SmpB together mimic tRNA shape, replacing the anticodon stem-loop with SmpB. tmRNA is encoded by the ssrA gene; the 2 termini fold to resemble tRNA(Ala) and it encodes a 'tag peptide', a short internal open reading frame. During trans-translation Ala-aminoacylated tmRNA acts like a tRNA, entering the A-site of stalled ribosomes, displacing the stalled mRNA. The ribosome then switches to translate the ORF on the tmRNA; the nascent peptide is terminated with the 'tag peptide' encoded by the tmRNA and targeted for degradation. The ribosome is freed to recommence translation, which seems to be the essential function of trans-translation. The polypeptide is SsrA-binding protein (Pseudoalteromonas translucida (strain TAC 125)).